Consider the following 660-residue polypeptide: UPF0603 protein MT2410 (660 aa).

Residues 1 to 26 (MRLVRLLGMVLTILAAGLLLGPPAGA) form the signal peptide. The chain crosses the membrane as a helical span at residues 162–182 (VVLLVTVGIIVIVVAVLLVVM). Positions 488-567 (DQLTKVDADL…LEAAHDRKSS (80 aa)) form a coiled coil. Residues 605–625 (GGNNAGAILGGIIIGDLLSGG) traverse the membrane as a helical segment. The disordered stretch occupies residues 638–660 (FGGSSNAPGSSPDGGFLGGGGRF).

This sequence belongs to the UPF0603 family.

The protein resides in the cell membrane. May play a role in septum formation. The protein is UPF0603 protein MT2410 of Mycobacterium tuberculosis (strain CDC 1551 / Oshkosh).